Here is a 1343-residue protein sequence, read N- to C-terminus: DNA-directed RNA polymerase subunit beta (1343 aa).

Belongs to the RNA polymerase beta chain family. As to quaternary structure, the RNAP catalytic core consists of 2 alpha, 1 beta, 1 beta' and 1 omega subunit. When a sigma factor is associated with the core the holoenzyme is formed, which can initiate transcription.

The catalysed reaction is RNA(n) + a ribonucleoside 5'-triphosphate = RNA(n+1) + diphosphate. Its function is as follows. DNA-dependent RNA polymerase catalyzes the transcription of DNA into RNA using the four ribonucleoside triphosphates as substrates. The polypeptide is DNA-directed RNA polymerase subunit beta (Shewanella violacea).